The following is an 898-amino-acid chain: Alanine--tRNA ligase (898 aa).

Residues His-584, His-588, Cys-686, and His-690 each contribute to the Zn(2+) site.

This sequence belongs to the class-II aminoacyl-tRNA synthetase family. Zn(2+) is required as a cofactor.

The protein resides in the cytoplasm. The enzyme catalyses tRNA(Ala) + L-alanine + ATP = L-alanyl-tRNA(Ala) + AMP + diphosphate. Catalyzes the attachment of alanine to tRNA(Ala) in a two-step reaction: alanine is first activated by ATP to form Ala-AMP and then transferred to the acceptor end of tRNA(Ala). Also edits incorrectly charged Ser-tRNA(Ala) and Gly-tRNA(Ala) via its editing domain. In Myxococcus xanthus (strain DK1622), this protein is Alanine--tRNA ligase.